A 218-amino-acid polypeptide reads, in one-letter code: UPF0173 metal-dependent hydrolase Mpal_1063 (218 aa).

It belongs to the UPF0173 family.

This chain is UPF0173 metal-dependent hydrolase Mpal_1063, found in Methanosphaerula palustris (strain ATCC BAA-1556 / DSM 19958 / E1-9c).